The primary structure comprises 476 residues: Protein transport protein Sec61 subunit alpha isoform 1 (476 aa).

Topologically, residues 1-33 (MAIKFLEVIKPFCVILPEIQKPERKIQFKEKVL) are cytoplasmic. The chain crosses the membrane as a helical span at residues 34 to 53 (WTAITLFIFLVCCQIPLFGI). At 54 to 76 (MSSDSADPFYWMRVILASNRGTL) the chain is on the lumenal side. Residues 77 to 96 (MELGISPIVTSGLIMQLLAG) form a helical membrane-spanning segment. Topologically, residues 97-117 (AKIIEVGDTPKDRALFNGAQK) are cytoplasmic. Residues 118-138 (LFGMIITIGQSIVYVMTGMYG) traverse the membrane as a helical segment. Over 139-144 (DPSEMG) the chain is Lumenal. A helical membrane pass occupies residues 145–165 (AGICLLITIQLFVAGLIVLLL). The Cytoplasmic segment spans residues 166–172 (DELLQKG). The helical transmembrane segment at 173 to 193 (YGLGSGISLFIATNICETIVW) threads the bilayer. Over 194 to 240 (KAFSPTTVNTGRGMEFEGAIIALFHLLATRTDKVRALREAFYRQNLP) the chain is Lumenal. Residues 241 to 261 (NLMNLIATIFVFAVVIYFQGF) traverse the membrane as a helical segment. The Cytoplasmic portion of the chain corresponds to 262–288 (RVDLPIKSARYRGQYNTYPIKLFYTSN). Residues 289 to 309 (IPIILQSALVSNLYVISQMLS) traverse the membrane as a helical segment. The Lumenal segment spans residues 310 to 354 (ARFSGNLLVSLLGTWSDTSSGGPARAYPVGGLCYYLSPPESFGSV). Residues 355–375 (LEDPVHAVVYIVFMLGSCAFF) traverse the membrane as a helical segment. Residues 376-420 (SKTWIEVSGSSAKDVAKQLKEQQMVMRGHRETSMVHELNRYIPTA) are Cytoplasmic-facing. Residues 421 to 441 (AAFGGLCIGALSVLADFLGAI) traverse the membrane as a helical segment. Residues 442 to 445 (GSGT) lie on the Lumenal side of the membrane. The chain crosses the membrane as a helical span at residues 446 to 462 (GILLAVTIIYQYFEIFV). The Cytoplasmic portion of the chain corresponds to 463 to 476 (KEQSEVGSMGALLF).

It belongs to the SecY/SEC61-alpha family. As to quaternary structure, the SEC61 channel-forming translocon complex consists of channel-forming core components SEC61A1, SEC61B and SEC61G and different auxiliary components such as SEC62 and SEC63. The SEC61 channel associates with the multi-pass translocon (MPT) complex. Expressed in proximal and distal tubules in kidney (at protein level).

It is found in the endoplasmic reticulum membrane. Its function is as follows. Component of SEC61 channel-forming translocon complex that mediates transport of signal peptide-containing precursor polypeptides across the endoplasmic reticulum (ER). Forms a ribosome receptor and a gated pore in the ER membrane, both functions required for cotranslational translocation of nascent polypeptides. May cooperate with auxiliary protein SEC62, SEC63 and HSPA5/BiP to enable post-translational transport of small presecretory proteins. The SEC61 channel is also involved in ER membrane insertion of transmembrane proteins: it mediates membrane insertion of the first few transmembrane segments of proteins, while insertion of subsequent transmembrane regions of multi-pass membrane proteins is mediated by the multi-pass translocon (MPT) complex. The SEC61 channel cooperates with the translocating protein TRAM1 to import nascent proteins into the ER. Controls the passive efflux of calcium ions from the ER lumen to the cytosol through SEC61 channel, contributing to the maintenance of cellular calcium homeostasis. Plays a critical role in nephrogenesis, specifically at pronephros stage. This chain is Protein transport protein Sec61 subunit alpha isoform 1 (SEC61A1), found in Homo sapiens (Human).